Here is a 219-residue protein sequence, read N- to C-terminus: Protoglabretal synthase ISM2 (219 aa).

A run of 5 helical transmembrane segments spans residues 26–46 (VHAWNGAATFLVMYGIWVLAG), 59–79 (LMIWWAVSGLIHIIHEGYWLF), 112–132 (AVVGIEGIAVIIVGPASLFAV), 144–164 (ILQLALALVQFYGSTLYFITA), and 178–198 (YYKYFIAQGGTWLLFPALIII). The region spanning 55-197 (TDKWLMIWWA…TWLLFPALII (143 aa)) is the EXPERA domain.

It belongs to the EBP family.

The protein localises to the membrane. It catalyses the reaction 7,8-epoxymelianol = protoglabretal. It participates in secondary metabolite biosynthesis; terpenoid biosynthesis. Its function is as follows. Isomerase involved in the biosynthesis of glabretanes triterpene natural products such as glabretal, a component with in vitro antiproliferative properties on lymphocytes. Catalyzes the conversion of 7,8-epoxymelianol to protoglabretal via skeletal rearrangements. This is Protoglabretal synthase ISM2 from Ailanthus altissima (Tree-of-heaven).